Here is a 392-residue protein sequence, read N- to C-terminus: Queuine tRNA-ribosyltransferase (392 aa).

The Proton acceptor role is filled by D93. Substrate contacts are provided by residues 93 to 97, D147, Q189, and G216; that span reads DSGGY. Residues 247–253 are RNA binding; that stretch reads GVGAPED. The Nucleophile role is filled by D266. Positions 271 to 275 are RNA binding; important for wobble base 34 recognition; the sequence is TRVAR. Positions 304, 306, 309, and 335 each coordinate Zn(2+).

The protein belongs to the queuine tRNA-ribosyltransferase family. In terms of assembly, homodimer. Within each dimer, one monomer is responsible for RNA recognition and catalysis, while the other monomer binds to the replacement base PreQ1. Zn(2+) is required as a cofactor.

The catalysed reaction is 7-aminomethyl-7-carbaguanine + guanosine(34) in tRNA = 7-aminomethyl-7-carbaguanosine(34) in tRNA + guanine. Its pathway is tRNA modification; tRNA-queuosine biosynthesis. Catalyzes the base-exchange of a guanine (G) residue with the queuine precursor 7-aminomethyl-7-deazaguanine (PreQ1) at position 34 (anticodon wobble position) in tRNAs with GU(N) anticodons (tRNA-Asp, -Asn, -His and -Tyr). Catalysis occurs through a double-displacement mechanism. The nucleophile active site attacks the C1' of nucleotide 34 to detach the guanine base from the RNA, forming a covalent enzyme-RNA intermediate. The proton acceptor active site deprotonates the incoming PreQ1, allowing a nucleophilic attack on the C1' of the ribose to form the product. After dissociation, two additional enzymatic reactions on the tRNA convert PreQ1 to queuine (Q), resulting in the hypermodified nucleoside queuosine (7-(((4,5-cis-dihydroxy-2-cyclopenten-1-yl)amino)methyl)-7-deazaguanosine). This chain is Queuine tRNA-ribosyltransferase, found in Dehalococcoides mccartyi (strain CBDB1).